We begin with the raw amino-acid sequence, 323 residues long: Malate dehydrogenase (323 aa).

NAD(+) is bound by residues 20-25 and Asp44; that span reads GAGRVG. Residues Arg93 and Arg99 each contribute to the substrate site. Residues Asn106 and 129–131 each bind NAD(+); that span reads VTN. Substrate-binding residues include Asn131 and Arg162. The Proton acceptor role is filled by His186.

This sequence belongs to the LDH/MDH superfamily. MDH type 3 family.

It catalyses the reaction (S)-malate + NAD(+) = oxaloacetate + NADH + H(+). Its function is as follows. Catalyzes the reversible oxidation of malate to oxaloacetate. The sequence is that of Malate dehydrogenase from Nostoc sp. (strain PCC 7120 / SAG 25.82 / UTEX 2576).